A 196-amino-acid chain; its full sequence is GTP cyclohydrolase-2 (196 aa).

A GTP-binding site is contributed by Arg49–Glu53. Zn(2+) is bound by residues Cys54, Cys65, and Cys67. GTP-binding positions include Gln70, Glu92–Arg94, and Thr114. The Proton acceptor role is filled by Asp126. The Nucleophile role is filled by Arg128. 2 residues coordinate GTP: Thr149 and Lys154.

This sequence belongs to the GTP cyclohydrolase II family. As to quaternary structure, homodimer. The cofactor is Zn(2+).

It carries out the reaction GTP + 4 H2O = 2,5-diamino-6-hydroxy-4-(5-phosphoribosylamino)-pyrimidine + formate + 2 phosphate + 3 H(+). It participates in cofactor biosynthesis; riboflavin biosynthesis; 5-amino-6-(D-ribitylamino)uracil from GTP: step 1/4. Catalyzes the conversion of GTP to 2,5-diamino-6-ribosylamino-4(3H)-pyrimidinone 5'-phosphate (DARP), formate and pyrophosphate. This Enterobacter sp. (strain 638) protein is GTP cyclohydrolase-2.